Consider the following 199-residue polypeptide: Nitrile hydratase subunit alpha (199 aa).

Fe(3+) contacts are provided by cysteine 102, cysteine 105, serine 106, and cysteine 107. The residue at position 105 (cysteine 105) is a Cysteine sulfinic acid (-SO2H). A Cysteine sulfenic acid (-SOH) modification is found at cysteine 107.

Belongs to the nitrile hydratase subunit alpha family. As to quaternary structure, heterodimer of an alpha and a beta chain. It depends on Fe(3+) as a cofactor. Post-translationally, oxidation on Cys-105 is essential for the activity. In terms of processing, oxidation on Cys-107 stabilizes the Fe-NO ligand coordinated in the inactive form.

It carries out the reaction an aliphatic primary amide = an aliphatic nitrile + H2O. With respect to regulation, inactivated by oxidation of Cys-107 to a sulfenic acid. Functionally, NHase catalyzes the hydration of various nitrile compounds to the corresponding amides. Industrial production of acrylamide is now being developed using some of the enzymes of this class. The sequence is that of Nitrile hydratase subunit alpha (nthA) from Rhodococcus sp.